A 169-amino-acid polypeptide reads, in one-letter code: Type II secretion system protein H (169 aa).

A propeptide spans 1–29 (leader sequence); sequence MRVARLPLLHPHRAAPVVRRQLRGSSLLE. Met30 is subject to N-methylmethionine. The chain crosses the membrane as a helical span at residues 32–52; the sequence is LVIALIALAGVLAAAALTGGI.

The protein belongs to the GSP H family. As to quaternary structure, type II secretion is composed of four main components: the outer membrane complex, the inner membrane complex, the cytoplasmic secretion ATPase and the periplasm-spanning pseudopilus. Interacts with core component XpsG. Interacts with minor pseudopilins XpsI and XpsJ. Post-translationally, cleaved by prepilin peptidase. Methylated by prepilin peptidase at the amino group of the N-terminal phenylalanine once the leader sequence is cleaved by prepilin peptidase.

It localises to the cell inner membrane. Its function is as follows. Component of the type II secretion system required for the energy-dependent secretion of extracellular factors such as proteases and toxins from the periplasm. Part of the pseudopilus tip complex that is critical for the recognition and binding of secretion substrates. The polypeptide is Type II secretion system protein H (xpsH) (Xanthomonas campestris pv. campestris (strain ATCC 33913 / DSM 3586 / NCPPB 528 / LMG 568 / P 25)).